Here is a 192-residue protein sequence, read N- to C-terminus: Imidazoleglycerol-phosphate dehydratase (192 aa).

It belongs to the imidazoleglycerol-phosphate dehydratase family.

It localises to the cytoplasm. It catalyses the reaction D-erythro-1-(imidazol-4-yl)glycerol 3-phosphate = 3-(imidazol-4-yl)-2-oxopropyl phosphate + H2O. The protein operates within amino-acid biosynthesis; L-histidine biosynthesis; L-histidine from 5-phospho-alpha-D-ribose 1-diphosphate: step 6/9. The sequence is that of Imidazoleglycerol-phosphate dehydratase from Staphylococcus aureus (strain MRSA252).